The sequence spans 50 residues: Kappa-actitoxin-Bcs4a (50 aa).

Belongs to the sea anemone type 5 potassium channel toxin family. In terms of processing, contains 4 disulfide bonds.

The protein resides in the secreted. It localises to the nematocyst. Its function is as follows. Inhibits voltage-gated potassium channels (Kv1/KCNA). Is potent on Drosophila Shaker IR channels (IC(50)=94.25 nM), and rKv1.2/KCNA2 (IC(50)=172.59 nM), and moderately active on hKv1.3/KCNA3 (IC(50)=1006.48 nM), rKv1.6/KCNA6 (IC(50)=2245.93 nM), and Kv1.1/KCNA1 (IC(50) around 3 uM). In vivo, induces a rapid increase in swimming speed on zebrafish larvae, as well as death which occurs between 2 and 18 hours later. Also paralyzes swimming crabs (C.danae) when injected at the junction between the body and the walking leg. This Bunodosoma caissarum (Sea anemone) protein is Kappa-actitoxin-Bcs4a.